The chain runs to 382 residues: S-adenosylmethionine synthase (382 aa).

Histidine 15 contributes to the ATP binding site. Aspartate 17 contributes to the Mg(2+) binding site. Glutamate 43 is a binding site for K(+). L-methionine contacts are provided by glutamate 56 and glutamine 99. Positions 99-109 (QSPDINQGVDR) are flexible loop. ATP-binding positions include 164–166 (DAK), 230–231 (RF), aspartate 239, 245–246 (RK), alanine 262, and lysine 266. Aspartate 239 is a binding site for L-methionine. Residue lysine 270 coordinates L-methionine.

This sequence belongs to the AdoMet synthase family. In terms of assembly, homotetramer; dimer of dimers. Requires Mg(2+) as cofactor. K(+) is required as a cofactor.

It localises to the cytoplasm. It catalyses the reaction L-methionine + ATP + H2O = S-adenosyl-L-methionine + phosphate + diphosphate. Its pathway is amino-acid biosynthesis; S-adenosyl-L-methionine biosynthesis; S-adenosyl-L-methionine from L-methionine: step 1/1. Functionally, catalyzes the formation of S-adenosylmethionine (AdoMet) from methionine and ATP. The overall synthetic reaction is composed of two sequential steps, AdoMet formation and the subsequent tripolyphosphate hydrolysis which occurs prior to release of AdoMet from the enzyme. The polypeptide is S-adenosylmethionine synthase (Psychromonas ingrahamii (strain DSM 17664 / CCUG 51855 / 37)).